The chain runs to 191 residues: Probable GTP-binding protein EngB (191 aa).

The EngB-type G domain occupies 19–188; sequence NIPEICFMGR…HKKIFELFVE (170 aa). Residues 27–34, 53–57, 70–73, 136–139, and 167–169 each bind GTP; these read GRSNVGKS, GRTQL, DLPG, NKFD, and AST. Positions 34 and 55 each coordinate Mg(2+).

The protein belongs to the TRAFAC class TrmE-Era-EngA-EngB-Septin-like GTPase superfamily. EngB GTPase family. Requires Mg(2+) as cofactor.

Functionally, necessary for normal cell division and for the maintenance of normal septation. This chain is Probable GTP-binding protein EngB, found in Mycoplasma genitalium (strain ATCC 33530 / DSM 19775 / NCTC 10195 / G37) (Mycoplasmoides genitalium).